Reading from the N-terminus, the 227-residue chain is Cytochrome c oxidase subunit 2 (227 aa).

Residues 1–14 (MAYPFQLGFQDATS) lie on the Mitochondrial intermembrane side of the membrane. The chain crosses the membrane as a helical span at residues 15–45 (PIMEELLHFHDHTLMIVFLISSLVLYIISSM). Residues 46-59 (LTTKLTHTSTMDAQ) are Mitochondrial matrix-facing. The helical transmembrane segment at 60–87 (EVETIWTILPAIILILIALPSLRILYMM) threads the bilayer. Topologically, residues 88–227 (DEINNPSLTV…YFEEWSASML (140 aa)) are mitochondrial intermembrane. Cu cation is bound by residues H161, C196, E198, C200, H204, and M207. Mg(2+) is bound at residue E198.

This sequence belongs to the cytochrome c oxidase subunit 2 family. In terms of assembly, component of the cytochrome c oxidase (complex IV, CIV), a multisubunit enzyme composed of 14 subunits. The complex is composed of a catalytic core of 3 subunits MT-CO1, MT-CO2 and MT-CO3, encoded in the mitochondrial DNA, and 11 supernumerary subunits COX4I, COX5A, COX5B, COX6A, COX6B, COX6C, COX7A, COX7B, COX7C, COX8 and NDUFA4, which are encoded in the nuclear genome. The complex exists as a monomer or a dimer and forms supercomplexes (SCs) in the inner mitochondrial membrane with NADH-ubiquinone oxidoreductase (complex I, CI) and ubiquinol-cytochrome c oxidoreductase (cytochrome b-c1 complex, complex III, CIII), resulting in different assemblies (supercomplex SCI(1)III(2)IV(1) and megacomplex MCI(2)III(2)IV(2)). Found in a complex with TMEM177, COA6, COX18, COX20, SCO1 and SCO2. Interacts with TMEM177 in a COX20-dependent manner. Interacts with COX20. Interacts with COX16. Cu cation is required as a cofactor.

The protein localises to the mitochondrion inner membrane. The enzyme catalyses 4 Fe(II)-[cytochrome c] + O2 + 8 H(+)(in) = 4 Fe(III)-[cytochrome c] + 2 H2O + 4 H(+)(out). Component of the cytochrome c oxidase, the last enzyme in the mitochondrial electron transport chain which drives oxidative phosphorylation. The respiratory chain contains 3 multisubunit complexes succinate dehydrogenase (complex II, CII), ubiquinol-cytochrome c oxidoreductase (cytochrome b-c1 complex, complex III, CIII) and cytochrome c oxidase (complex IV, CIV), that cooperate to transfer electrons derived from NADH and succinate to molecular oxygen, creating an electrochemical gradient over the inner membrane that drives transmembrane transport and the ATP synthase. Cytochrome c oxidase is the component of the respiratory chain that catalyzes the reduction of oxygen to water. Electrons originating from reduced cytochrome c in the intermembrane space (IMS) are transferred via the dinuclear copper A center (CU(A)) of subunit 2 and heme A of subunit 1 to the active site in subunit 1, a binuclear center (BNC) formed by heme A3 and copper B (CU(B)). The BNC reduces molecular oxygen to 2 water molecules using 4 electrons from cytochrome c in the IMS and 4 protons from the mitochondrial matrix. The polypeptide is Cytochrome c oxidase subunit 2 (MT-CO2) (Equus asinus (Donkey)).